The sequence spans 501 residues: MFSNQYIQQRIHKANSLREEGKNPYQNGLKRSLTNAAFLEKYAYVKDLEEPKDKEKCESIVGRVKLLRLMGKACFIKVEDESAILQAYVSQNELNDEFKSLKKHLEVGDIVLVKGFPFATKTGELSVHALEFHILSKTIVPLPEKFHGLSDIELRYRQRYLDLIVNPSVKDVFKKRSLIVSSVRKFFEMEGFLEVETPMMHPIPGGANARPFITYHNALEVERYLRIAPELYLKRLIVGGFEAVFEINRNFRNEGMDHSHNPEFTMIEFYWAYHTYEDLIELSKRLFDYLLKTLNLDSKIIYNDMEVDFNQTSVISYLDALETIGGISRDILEKEDRLLAYLLEQGVKVEPNLTYGKLLAEAFDHFVEHQLINPTFVTQYPIEISPLARRNDSNPNIADRFELFIAGKEIANGFSELNDPLDQLERFKNQVAEKEKGDEEAQYMDEDYVWALAHGMPPTAGQGIGIDRLVMLLTGAKSIKDVILFPAMRPVKNDFNIESGE.

Residues glutamate 402 and glutamate 409 each coordinate Mg(2+).

It belongs to the class-II aminoacyl-tRNA synthetase family. As to quaternary structure, homodimer. Mg(2+) serves as cofactor.

The protein resides in the cytoplasm. It carries out the reaction tRNA(Lys) + L-lysine + ATP = L-lysyl-tRNA(Lys) + AMP + diphosphate. The sequence is that of Lysine--tRNA ligase from Helicobacter pylori (strain P12).